A 479-amino-acid chain; its full sequence is Poly(A) polymerase catalytic subunit (479 aa).

Active-site residues include aspartate 202 and aspartate 204. The Ca(2+) site is built by aspartate 202, aspartate 204, and aspartate 253.

It belongs to the poxviridae poly(A) polymerase catalytic subunit family. In terms of assembly, heterodimer of a large (catalytic) subunit and a small (regulatory) subunit.

It catalyses the reaction RNA(n) + ATP = RNA(n)-3'-adenine ribonucleotide + diphosphate. In terms of biological role, polymerase that creates the 3'-poly(A) tail of mRNA's. The polypeptide is Poly(A) polymerase catalytic subunit (OPG063) (Bos taurus (Bovine)).